We begin with the raw amino-acid sequence, 329 residues long: GTP 3',8-cyclase (329 aa).

One can recognise a Radical SAM core domain in the interval 8-234; that stretch reads AFARKFYYLR…QLRQRSDGPA (227 aa). Position 17 (Arg-17) interacts with GTP. [4Fe-4S] cluster is bound by residues Cys-24 and Cys-28. Tyr-30 lines the S-adenosyl-L-methionine pocket. Residue Cys-31 participates in [4Fe-4S] cluster binding. Arg-68 contributes to the GTP binding site. Residue Gly-72 coordinates S-adenosyl-L-methionine. Thr-99 lines the GTP pocket. Residue Ser-123 coordinates S-adenosyl-L-methionine. Lys-160 lines the GTP pocket. Met-194 serves as a coordination point for S-adenosyl-L-methionine. [4Fe-4S] cluster is bound by residues Cys-257 and Cys-260. 262–264 contacts GTP; it reads RLR. A [4Fe-4S] cluster-binding site is contributed by Cys-274.

This sequence belongs to the radical SAM superfamily. MoaA family. In terms of assembly, monomer and homodimer. The cofactor is [4Fe-4S] cluster.

The catalysed reaction is GTP + AH2 + S-adenosyl-L-methionine = (8S)-3',8-cyclo-7,8-dihydroguanosine 5'-triphosphate + 5'-deoxyadenosine + L-methionine + A + H(+). The protein operates within cofactor biosynthesis; molybdopterin biosynthesis. Its function is as follows. Catalyzes the cyclization of GTP to (8S)-3',8-cyclo-7,8-dihydroguanosine 5'-triphosphate. This Salmonella heidelberg (strain SL476) protein is GTP 3',8-cyclase.